A 353-amino-acid chain; its full sequence is Holliday junction branch migration complex subunit RuvB (353 aa).

Positions 1–25 (MDPGPAGDEVSLAPQQETAEQDVET) are disordered. Residues 1-188 (MDPGPAGDEV…FGFTAHMEFY (188 aa)) form a large ATPase domain (RuvB-L) region. ATP contacts are provided by residues Leu27, Arg28, Gly69, Lys72, Thr73, Ser74, 135–137 (EDY), Arg178, Tyr188, and Arg225. Thr73 serves as a coordination point for Mg(2+). A small ATPAse domain (RuvB-S) region spans residues 189–259 (EPAELELVVR…VARAALEVYD (71 aa)). The head domain (RuvB-H) stretch occupies residues 262 to 353 (EHGLDRLDRA…ATRSLFADEV (92 aa)). DNA is bound by residues Arg317 and Arg322.

This sequence belongs to the RuvB family. In terms of assembly, homohexamer. Forms an RuvA(8)-RuvB(12)-Holliday junction (HJ) complex. HJ DNA is sandwiched between 2 RuvA tetramers; dsDNA enters through RuvA and exits via RuvB. An RuvB hexamer assembles on each DNA strand where it exits the tetramer. Each RuvB hexamer is contacted by two RuvA subunits (via domain III) on 2 adjacent RuvB subunits; this complex drives branch migration. In the full resolvosome a probable DNA-RuvA(4)-RuvB(12)-RuvC(2) complex forms which resolves the HJ.

It localises to the cytoplasm. The enzyme catalyses ATP + H2O = ADP + phosphate + H(+). Functionally, the RuvA-RuvB-RuvC complex processes Holliday junction (HJ) DNA during genetic recombination and DNA repair, while the RuvA-RuvB complex plays an important role in the rescue of blocked DNA replication forks via replication fork reversal (RFR). RuvA specifically binds to HJ cruciform DNA, conferring on it an open structure. The RuvB hexamer acts as an ATP-dependent pump, pulling dsDNA into and through the RuvAB complex. RuvB forms 2 homohexamers on either side of HJ DNA bound by 1 or 2 RuvA tetramers; 4 subunits per hexamer contact DNA at a time. Coordinated motions by a converter formed by DNA-disengaged RuvB subunits stimulates ATP hydrolysis and nucleotide exchange. Immobilization of the converter enables RuvB to convert the ATP-contained energy into a lever motion, pulling 2 nucleotides of DNA out of the RuvA tetramer per ATP hydrolyzed, thus driving DNA branch migration. The RuvB motors rotate together with the DNA substrate, which together with the progressing nucleotide cycle form the mechanistic basis for DNA recombination by continuous HJ branch migration. Branch migration allows RuvC to scan DNA until it finds its consensus sequence, where it cleaves and resolves cruciform DNA. The protein is Holliday junction branch migration complex subunit RuvB of Saccharopolyspora erythraea (strain ATCC 11635 / DSM 40517 / JCM 4748 / NBRC 13426 / NCIMB 8594 / NRRL 2338).